A 158-amino-acid polypeptide reads, in one-letter code: Hypoxanthine DNA glycosylase (158 aa).

Residue asparagine 39 is part of the active site.

Belongs to the uracil-DNA glycosylase (UDG) superfamily. Type 6 (HDG) family.

Its function is as follows. Excises hypoxanthine, a deamination product of adenine, from double-stranded DNA. Acts on double-stranded DNA containing G/I, T/I, A/I and C/I base pairs, but not on single-stranded inosine-containing DNA. Also has minor xanthine DNA glycosylase activity. Lacks any detectable uracil-DNA glycosylase activity. This chain is Hypoxanthine DNA glycosylase, found in Methanosarcina acetivorans (strain ATCC 35395 / DSM 2834 / JCM 12185 / C2A).